A 509-amino-acid chain; its full sequence is ATP synthase subunit alpha (509 aa).

169 to 176 (GDRQTGKT) provides a ligand contact to ATP.

Belongs to the ATPase alpha/beta chains family. As to quaternary structure, F-type ATPases have 2 components, CF(1) - the catalytic core - and CF(0) - the membrane proton channel. CF(1) has five subunits: alpha(3), beta(3), gamma(1), delta(1), epsilon(1). CF(0) has three main subunits: a(1), b(2) and c(9-12). The alpha and beta chains form an alternating ring which encloses part of the gamma chain. CF(1) is attached to CF(0) by a central stalk formed by the gamma and epsilon chains, while a peripheral stalk is formed by the delta and b chains.

The protein resides in the cell inner membrane. The catalysed reaction is ATP + H2O + 4 H(+)(in) = ADP + phosphate + 5 H(+)(out). Its function is as follows. Produces ATP from ADP in the presence of a proton gradient across the membrane. The alpha chain is a regulatory subunit. This Brucella canis (strain ATCC 23365 / NCTC 10854 / RM-666) protein is ATP synthase subunit alpha.